Reading from the N-terminus, the 433-residue chain is Serine hydroxymethyltransferase (433 aa).

(6S)-5,6,7,8-tetrahydrofolate-binding positions include leucine 121 and 125 to 127 (GHI). At lysine 231 the chain carries N6-(pyridoxal phosphate)lysine.

Belongs to the SHMT family. As to quaternary structure, homodimer. Pyridoxal 5'-phosphate is required as a cofactor.

It is found in the cytoplasm. Its pathway is amino-acid biosynthesis; glycine biosynthesis; glycine from L-serine: step 1/1. Functionally, catalyzes the reversible interconversion of serine and glycine with a modified folate serving as the one-carbon carrier. Also exhibits a pteridine-independent aldolase activity toward beta-hydroxyamino acids, producing glycine and aldehydes, via a retro-aldol mechanism. The chain is Serine hydroxymethyltransferase from Picrophilus torridus (strain ATCC 700027 / DSM 9790 / JCM 10055 / NBRC 100828 / KAW 2/3).